The following is a 412-amino-acid chain: 3,4-dihydroxybenzoate--[aryl-carrier protein] ligase (412 aa).

This sequence belongs to the ATP-dependent AMP-binding enzyme family.

The catalysed reaction is holo-[aryl-carrier protein] + 3,4-dihydroxybenzoate + ATP = 3,4-dihydroxybenzoyl-[aryl-carrier protein] + AMP + diphosphate. The enzyme catalyses 3,4-dihydroxybenzoate + ATP + H(+) = 3,4-dihydroxybenzoyl-5'-AMP + diphosphate. It catalyses the reaction 3,4-dihydroxybenzoyl-5'-AMP + holo-[aryl-carrier protein] = 3,4-dihydroxybenzoyl-[aryl-carrier protein] + AMP + H(+). Its pathway is siderophore biosynthesis; petrobactin biosynthesis. ATP-pyrophosphate exchange is inhibited in vitro by nonhydrolyzable acylsulfamate analogs that mimic the AsbC-bound intermediate 3,4-dihydroxybenzoyl-AMP. In terms of biological role, involved in the biosynthesis of petrobactin, a catecholate siderophore that functions in both iron acquisition and virulence. Catalyzes the adenylation of 3,4-dihydroxybenzoate (3,4-DHBA) to the corresponding AMP ester, followed by the transfer of the activated unit to the phosphopantetheine thiol of the aryl-carrier protein AsbD. This is 3,4-dihydroxybenzoate--[aryl-carrier protein] ligase from Bacillus anthracis.